The primary structure comprises 542 residues: Probable E3 ubiquitin-protein ligase ARI11 (542 aa).

A disordered region spans residues 1-25 (MSSSDRDIIDIESGEEDLYSDGGND). Over residues 10 to 19 (DIESGEEDLY) the composition is skewed to acidic residues. Residues 135–342 (VDIQCGICFE…SDHKACNAFK (208 aa)) are TRIAD supradomain. Zn(2+)-binding residues include C139, C142, C156, H158, C161, C164, C184, C189, C228, C233, C251, C253, C258, C261, H266, C271, C298, and C301. An RING-type 1 zinc finger spans residues 139–189 (CGICFESYTRKEIARVSCGHPYCKTCWTGYITTKIEDGPGCLRVKCPEPSC). The segment at 208–271 (DKYYRYFLRS…CEDAHSPVDC (64 aa)) adopts an IBR-type zinc-finger fold. The segment at 298–328 (CPKCKRPIEKNTGCNHMSCSAPCRHYFCWAC) adopts an RING-type 2; atypical zinc-finger fold. Residue C311 is part of the active site. Zn(2+)-binding residues include C316, C320, C325, C328, H335, and C338.

Belongs to the RBR family. Ariadne subfamily. Requires Zn(2+) as cofactor.

The catalysed reaction is [E2 ubiquitin-conjugating enzyme]-S-ubiquitinyl-L-cysteine + [acceptor protein]-L-lysine = [E2 ubiquitin-conjugating enzyme]-L-cysteine + [acceptor protein]-N(6)-ubiquitinyl-L-lysine.. Its pathway is protein modification; protein ubiquitination. Functionally, might act as an E3 ubiquitin-protein ligase, or as part of E3 complex, which accepts ubiquitin from specific E2 ubiquitin-conjugating enzymes and then transfers it to substrates. This Arabidopsis thaliana (Mouse-ear cress) protein is Probable E3 ubiquitin-protein ligase ARI11 (ARI11).